A 171-amino-acid chain; its full sequence is Adenine phosphoribosyltransferase (171 aa).

This sequence belongs to the purine/pyrimidine phosphoribosyltransferase family. As to quaternary structure, homodimer.

The protein localises to the cytoplasm. The enzyme catalyses AMP + diphosphate = 5-phospho-alpha-D-ribose 1-diphosphate + adenine. It functions in the pathway purine metabolism; AMP biosynthesis via salvage pathway; AMP from adenine: step 1/1. In terms of biological role, catalyzes a salvage reaction resulting in the formation of AMP, that is energically less costly than de novo synthesis. In Geobacter metallireducens (strain ATCC 53774 / DSM 7210 / GS-15), this protein is Adenine phosphoribosyltransferase.